A 479-amino-acid chain; its full sequence is Fibrinogen beta chain (479 aa).

The first 18 residues, M1–A18, serve as a signal peptide directing secretion. The tract at residues T20–G82 is disordered. The segment at G33–R35 is beta-chain polymerization, binding distal domain of another fibrin. 2 stretches are compositionally biased toward basic and acidic residues: residues R35–P45 and A64–P78. 2 disulfide bridges follow: C219–C304 and C229–C258. One can recognise a Fibrinogen C-terminal domain in the interval N220–F476. N382 carries N-linked (GlcNAc...) asparagine glycosylation. A disulfide bond links C412 and C425.

As to quaternary structure, heterohexamer; disulfide linked. Contains 2 sets of 3 non-identical chains (alpha, beta and gamma). The 2 heterotrimers are in head to head conformation with the N-termini in a small central domain. Post-translationally, conversion of fibrinogen to fibrin is triggered by thrombin, which cleaves fibrinopeptides A and B from alpha and beta chains, and thus exposes the N-terminal polymerization sites responsible for the formation of the soft clot.

It is found in the secreted. Its function is as follows. Cleaved by the protease thrombin to yield monomers which, together with fibrinogen alpha (FGA) and fibrinogen gamma (FGG), polymerize to form an insoluble fibrin matrix. Fibrin has a major function in hemostasis as one of the primary components of blood clots. In addition, functions during the early stages of wound repair to stabilize the lesion and guide cell migration during re-epithelialization. Was originally thought to be essential for platelet aggregation, based on in vitro studies using anticoagulated blood. However subsequent studies have shown that it is not absolutely required for thrombus formation in vivo. Enhances expression of SELP in activated platelets. Maternal fibrinogen is essential for successful pregnancy. Fibrin deposition is also associated with infection, where it protects against IFNG-mediated hemorrhage. May also facilitate the antibacterial immune response via both innate and T-cell mediated pathways. The protein is Fibrinogen beta chain (Fgb) of Rattus norvegicus (Rat).